The primary structure comprises 662 residues: Rap guanine nucleotide exchange factor-like 1 (662 aa).

The disordered stretch occupies residues 1-149; it reads MKPLEKFLKK…PPWAPLGAPE (149 aa). Positions 20-48 are enriched in gly residues; the sequence is VTGGPGGGPGCCGGPGGGGGPGGGGGPAG. Composition is skewed to low complexity over residues 49 to 65 and 116 to 133; these read GLRP…LLLP and SGVP…ELSP. One can recognise a Ras-GEF domain in the interval 424-660; it reads EPEDVANHLT…FELSYKLEAN (237 aa).

Its function is as follows. Probable guanine nucleotide exchange factor (GEF). The chain is Rap guanine nucleotide exchange factor-like 1 (Rapgefl1) from Mus musculus (Mouse).